The chain runs to 208 residues: Putative dioxygenase RC0543 (208 aa).

This sequence belongs to the intradiol ring-cleavage dioxygenase family.

In Rickettsia conorii (strain ATCC VR-613 / Malish 7), this protein is Putative dioxygenase RC0543.